A 433-amino-acid chain; its full sequence is Glutamate-1-semialdehyde 2,1-aminomutase (433 aa).

At K273 the chain carries N6-(pyridoxal phosphate)lysine.

Belongs to the class-III pyridoxal-phosphate-dependent aminotransferase family. HemL subfamily. Homodimer. It depends on pyridoxal 5'-phosphate as a cofactor.

It localises to the cytoplasm. The enzyme catalyses (S)-4-amino-5-oxopentanoate = 5-aminolevulinate. It participates in porphyrin-containing compound metabolism; protoporphyrin-IX biosynthesis; 5-aminolevulinate from L-glutamyl-tRNA(Glu): step 2/2. The protein operates within porphyrin-containing compound metabolism; chlorophyll biosynthesis. In Crocosphaera subtropica (strain ATCC 51142 / BH68) (Cyanothece sp. (strain ATCC 51142)), this protein is Glutamate-1-semialdehyde 2,1-aminomutase.